The primary structure comprises 287 residues: Rhomboid-like protein 18 (287 aa).

6 consecutive transmembrane segments (helical) span residues 10–30 (NAPV…FFGI), 53–73 (LIIS…LYLL), 90–110 (VFIF…LSLT), 117–137 (LLTS…FLDI), 145–165 (VLGV…QLLL), and 172–192 (IFTG…IFGI). The UBA domain maps to 244 to 284 (EPSEEAIATLVSMGFDQNAARQALVHARNDVNAATNILLEA).

It belongs to the peptidase S54 family.

It localises to the membrane. Functionally, probable rhomboid-type serine protease that catalyzes intramembrane proteolysis. The protein is Rhomboid-like protein 18 of Arabidopsis thaliana (Mouse-ear cress).